The primary structure comprises 188 residues: Adenylate kinase (188 aa).

ATP is bound at residue 12 to 17 (GVGKGT). The segment at 32–61 (STGDIFRSAMANHTELGDKAKSFMDAGNLV) is NMP. Residues Thr33, Arg38, 59 to 61 (NLV), 89 to 92 (GYPR), and Gln96 contribute to the AMP site. Residues 130–136 (GRGREDD) are LID. Arg131 contacts ATP. The AMP site is built by Arg133 and Arg144. ATP is bound at residue Gly172.

The protein belongs to the adenylate kinase family. In terms of assembly, monomer.

It localises to the cytoplasm. The enzyme catalyses AMP + ATP = 2 ADP. The protein operates within purine metabolism; AMP biosynthesis via salvage pathway; AMP from ADP: step 1/1. Catalyzes the reversible transfer of the terminal phosphate group between ATP and AMP. Plays an important role in cellular energy homeostasis and in adenine nucleotide metabolism. The chain is Adenylate kinase from Oenococcus oeni (strain ATCC BAA-331 / PSU-1).